Consider the following 343-residue polypeptide: Protein RecA (343 aa).

Residue 64-71 coordinates ATP; it reads GPESSGKT.

It belongs to the RecA family.

Its subcellular location is the cytoplasm. In terms of biological role, can catalyze the hydrolysis of ATP in the presence of single-stranded DNA, the ATP-dependent uptake of single-stranded DNA by duplex DNA, and the ATP-dependent hybridization of homologous single-stranded DNAs. It interacts with LexA causing its activation and leading to its autocatalytic cleavage. This is Protein RecA from Bacillus cereus (strain ATCC 14579 / DSM 31 / CCUG 7414 / JCM 2152 / NBRC 15305 / NCIMB 9373 / NCTC 2599 / NRRL B-3711).